Reading from the N-terminus, the 299-residue chain is MADTKTSKCDEHFSVEKLKEWPEPESVSLMELLAREDIDEAVHAVLFRENYVVKRLDTYLQHLAVFKERRKEMLHKKWVENVVQPLQQRITDKITSYRRPGKNQVKYEHCLKQTNKPTKVSSSCLFQKQQEFREAKGTSYQHGRGKTHDTQKEAKETEKGLSFTPFSLRPHCSSPRERQRASARLMQSKPGGRNRYKGASSEKPVFTLKSHLPKEEKTVSRSQLVFERQFRASRLSQDIKEAEKKGLVVGTGPQRPRSWAAADSVPRPSLVGRRVMTAEILGEHLVSLHQAARSGLQWP.

Residues 135–201 form a disordered region; that stretch reads AKGTSYQHGR…GRNRYKGASS (67 aa). The segment covering 146 to 159 has biased composition (basic and acidic residues); the sequence is KTHDTQKEAKETEK. S264 carries the post-translational modification Phosphoserine.

It belongs to the FAM228 family.

This chain is Protein FAM228A (Fam228a), found in Mus musculus (Mouse).